A 506-amino-acid polypeptide reads, in one-letter code: Aldehyde dehydrogenase [NAD(P)+] 1 (506 aa).

E268 acts as the Proton acceptor in catalysis. C302 acts as the Nucleophile in catalysis.

This sequence belongs to the aldehyde dehydrogenase family.

The protein resides in the cytoplasm. It carries out the reaction an aldehyde + NAD(+) + H2O = a carboxylate + NADH + 2 H(+). The catalysed reaction is 3-aminopropanal + NAD(+) + H2O = beta-alanine + NADH + 2 H(+). In terms of biological role, cytoplasmic aldehyde dehydrogenase involved in ethanol oxidation. Required for pantothenic acid production through the conversion of 3-aminopropanal to beta-alanine, an intermediate in pantothenic acid (vitamin B5) and coenzyme A (CoA) biosynthesis. The polypeptide is Aldehyde dehydrogenase [NAD(P)+] 1 (ALD2) (Saccharomyces cerevisiae (strain ATCC 204508 / S288c) (Baker's yeast)).